The following is a 726-amino-acid chain: Methionine--tRNA ligase (726 aa).

The 'HIGH' region signature appears at 12 to 22 (PYVNNIPHLGN). Zn(2+)-binding residues include C143, C146, C155, and C158. A 'KMSKS' region motif is present at residues 330–334 (KFSKS). K333 is an ATP binding site. Residues 562 to 667 (FSEQICLKTV…DNPIPGERVI (106 aa)) form the tRNA-binding domain.

Belongs to the class-I aminoacyl-tRNA synthetase family. MetG type 1 subfamily. Homodimer. It depends on Zn(2+) as a cofactor.

It localises to the cytoplasm. The enzyme catalyses tRNA(Met) + L-methionine + ATP = L-methionyl-tRNA(Met) + AMP + diphosphate. In terms of biological role, is required not only for elongation of protein synthesis but also for the initiation of all mRNA translation through initiator tRNA(fMet) aminoacylation. This is Methionine--tRNA ligase from Borrelia duttonii (strain Ly).